The sequence spans 515 residues: GMP synthase [glutamine-hydrolyzing] (515 aa).

In terms of domain architecture, Glutamine amidotransferase type-1 spans 6 to 198 (KVIIIDYGSQ…LFHVAKLKAD (193 aa)). The active-site Nucleophile is the C83. Active-site residues include H172 and E174. The 192-residue stretch at 199–390 (WTMSSFVERA…LGLPDFIIWR (192 aa)) folds into the GMPS ATP-PPase domain. 226–232 (SGGIDST) provides a ligand contact to ATP.

Homodimer.

It catalyses the reaction XMP + L-glutamine + ATP + H2O = GMP + L-glutamate + AMP + diphosphate + 2 H(+). Its pathway is purine metabolism; GMP biosynthesis; GMP from XMP (L-Gln route): step 1/1. Functionally, catalyzes the synthesis of GMP from XMP. This is GMP synthase [glutamine-hydrolyzing] from Nitratidesulfovibrio vulgaris (strain DP4) (Desulfovibrio vulgaris).